We begin with the raw amino-acid sequence, 372 residues long: MTQPINGPDNPGRCFIGLMSGTSMDGVDGVLLRLDGAPHLLASVSLDIPPSLRATLLALNSSGPDELHRAALAANELARLYAQACAQLRQAAPEARVRAIGAHGQTVRHRPDLGYTVQLNAPALLAELSGIDVVADFRSRDVAAGGQGAPLVPPFHDAMFGGRGAPRAVLNLGGIGNVTLLAPGQAPRGFDTGPANVLLDAWCHAHTGKHYDHNGNWAATGSVSKALLHHLLNSEPWFDLPAPKSTGRDLFGLGWLHKHLDSSGLRLSPQDVQATLVELTAQTVARAIASEPIQDLLVCGGGARNPAIMQALARALPCPVAPTDSEGVPGQWVEAMAFAWLAQAFIDRLPAGLPGVTGARGPRVLGALYPAA.

ATP is bound at residue 21 to 28; sequence GTSMDGVD.

Belongs to the anhydro-N-acetylmuramic acid kinase family.

It catalyses the reaction 1,6-anhydro-N-acetyl-beta-muramate + ATP + H2O = N-acetyl-D-muramate 6-phosphate + ADP + H(+). The protein operates within amino-sugar metabolism; 1,6-anhydro-N-acetylmuramate degradation. It participates in cell wall biogenesis; peptidoglycan recycling. Its function is as follows. Catalyzes the specific phosphorylation of 1,6-anhydro-N-acetylmuramic acid (anhMurNAc) with the simultaneous cleavage of the 1,6-anhydro ring, generating MurNAc-6-P. Is required for the utilization of anhMurNAc either imported from the medium or derived from its own cell wall murein, and thus plays a role in cell wall recycling. The sequence is that of Anhydro-N-acetylmuramic acid kinase from Bordetella avium (strain 197N).